A 110-amino-acid polypeptide reads, in one-letter code: Light-harvesting complex-like protein OHP1, chloroplastic (110 aa).

A chloroplast-targeting transit peptide spans 1-41; that stretch reads MSSSPLSSSLFHPLSTLSTHCHGRRQNLCFNRKQQPFVVRA. At 42–74 the chain is on the stromal side; that stretch reads AKLPEGVIVPKAQPKSQPAFLGFTQTAEIWNSR. Residues 75–95 form a helical membrane-spanning segment; the sequence is ACMIGLIGTFIVELILNKGIL. Residues 96-110 lie on the Lumenal side of the membrane; sequence ELIGVEIGKGLDLPL.

Belongs to the ELIP/psbS family. In terms of assembly, may bind chlorophyll and form dimers in the thylakoid membrane. Component of a high molecular weight complex containing OHP1, OHP2 and HCF244, and PSII core proteins D1/D2, HCF136 and HCF173. Interacts with HCF244. Forms a trimeric complex with OHP2 and HCF244 that mutually stabilizes each subunit. Mostly expressed in cotyledons and shoot apices.

The protein localises to the plastid. Its subcellular location is the chloroplast thylakoid membrane. Functionally, may play a photoprotective role in the thylakoid membrane in response to light stress. Involved in photosystems I (PSI) and II (PSII) core proteins function. Forms a trimeric complex with OHP2 and HCF244 that is required to promote PSII core subunit assembly. The trimeric complex forms a transient PSII reaction center-like complex with PsbA, PsbD, PsbE, PsbF and PsbI subunits in thylakoids for early assembly of PSII as well as PSII repair. The trimeric complex is required for the recruitment of ribosomes to the psbA mRNA during PSII biogenesis and repair. Forms a heterodimer with OHP1 that binds chlorophylls and carotenoids, and that may function in the delivery of pigments to the PsbA subunit of PSII. The sequence is that of Light-harvesting complex-like protein OHP1, chloroplastic from Arabidopsis thaliana (Mouse-ear cress).